The chain runs to 260 residues: Snake venom serine protease homolog 1 (260 aa).

The N-terminal stretch at 1 to 18 is a signal peptide; sequence MVLIRVLANLLLLQLSYA. Positions 19-24 are excised as a propeptide; the sequence is QESSEL. The Peptidase S1 domain maps to 25–251; it reads VIGGDECDIN…YTDWIEGIIA (227 aa). 6 disulfide bridges follow: C31/C165, C52/C68, C100/C258, C144/C212, C176/C191, and C202/C227. A glycan (N-linked (GlcNAc...) asparagine) is linked at N253.

Belongs to the peptidase S1 family. Snake venom subfamily. Expressed by the venom gland.

It is found in the secreted. Functionally, snake venom serine protease homolog that may act in the hemostasis system of the prey. In Bitis gabonica (Gaboon adder), this protein is Snake venom serine protease homolog 1.